The sequence spans 367 residues: Palmitoyltransferase ZDHHC2 (367 aa).

Residues 1-16 (MAPSGPGSSARRRCRR) are Cytoplasmic-facing. A helical transmembrane segment spans residues 17–37 (VLYWIPVVFITLLLGWSYYAY). Over 38–54 (AIQLCIVSMENTGEQVV) the chain is Lumenal. The helical transmembrane segment at 55-75 (CLMAYHLLFAMFVWSYWKTIF) threads the bilayer. Topologically, residues 76–170 (TLPMNPSKEF…NNCVGFSNYK (95 aa)) are cytoplasmic. Residues 127–177 (RYCDRCQLIKPDRCHHCSVCDKCILKMDHHCPWVNNCVGFSNYKFFLLFLA) form the DHHC domain. Catalysis depends on cysteine 157, which acts as the S-palmitoyl cysteine intermediate. The chain crosses the membrane as a helical span at residues 171-191 (FFLLFLAYSLLYCLFIAATDL). Topologically, residues 192–208 (QYFIKFWTNGLPDTQAK) are lumenal. A helical membrane pass occupies residues 209–229 (FHIMFLFFAAAMFSVSLSSLF). Residues 230-367 (GYHCWLVSKN…NPALTMENET (138 aa)) lie on the Cytoplasmic side of the membrane. The interval 299–367 (NQDPEQASTP…NPALTMENET (69 aa)) is mediates localization to plasma membrane and recycling endosomes. The segment at 330-367 (ESQSHLLTDSQSWTESSINPGKCKAGMSNPALTMENET) is disordered. Over residues 333-348 (SHLLTDSQSWTESSIN) the composition is skewed to polar residues. The Non-canonical dileucine endocytic signal motif lies at 335 to 336 (LL). Residue serine 341 is modified to Phosphoserine. An NPxY-like endocytic signal motif is present at residues 358-361 (NPAL).

Belongs to the DHHC palmitoyltransferase family. As to quaternary structure, monomer. Homodimer. The monomeric form has a higher catalytic activity. In terms of processing, autopalmitoylated. In terms of tissue distribution, ubiquitously expressed. Reduced expression in colorectal cancers with liver metastasis.

The protein resides in the postsynaptic density. Its subcellular location is the postsynaptic recycling endosome membrane. It localises to the cell membrane. The protein localises to the endoplasmic reticulum membrane. It is found in the golgi apparatus membrane. The catalysed reaction is L-cysteinyl-[protein] + hexadecanoyl-CoA = S-hexadecanoyl-L-cysteinyl-[protein] + CoA. It carries out the reaction L-cysteinyl-[protein] + tetradecanoyl-CoA = S-tetradecanoyl-L-cysteinyl-[protein] + CoA. It catalyses the reaction L-cysteinyl-[protein] + octadecanoyl-CoA = S-octadecanoyl-L-cysteinyl-[protein] + CoA. Functionally, palmitoyltransferase that catalyzes the addition of palmitate onto various protein substrates and is involved in a variety of cellular processes. Has no stringent fatty acid selectivity and in addition to palmitate can also transfer onto target proteins myristate from tetradecanoyl-CoA and stearate from octadecanoyl-CoA. In the nervous system, plays a role in long term synaptic potentiation by palmitoylating AKAP5 through which it regulates protein trafficking from the dendritic recycling endosomes to the plasma membrane and controls both structural and functional plasticity at excitatory synapses. In dendrites, mediates the palmitoylation of DLG4 when synaptic activity decreases and induces synaptic clustering of DLG4 and associated AMPA-type glutamate receptors. Also mediates the de novo and turnover palmitoylation of RGS7BP, a shuttle for Gi/o-specific GTPase-activating proteins/GAPs, promoting its localization to the plasma membrane in response to the activation of G protein-coupled receptors. Through the localization of these GTPase-activating proteins/GAPs, it also probably plays a role in G protein-coupled receptors signaling in neurons. Also probably plays a role in cell adhesion by palmitoylating CD9 and CD151 to regulate their expression and function. Palmitoylates the endoplasmic reticulum protein CKAP4 and regulates its localization to the plasma membrane. Could also palmitoylate LCK and regulate its localization to the plasma membrane. In terms of biological role, (Microbial infection) Promotes Chikungunya virus (CHIKV) replication by mediating viral nsp1 palmitoylation. The protein is Palmitoyltransferase ZDHHC2 of Homo sapiens (Human).